The chain runs to 500 residues: Zinc finger and BTB domain-containing protein 34 (500 aa).

In terms of domain architecture, BTB spans 32 to 96; the sequence is CDIIVHIQGQ…CYTGRMSLQL (65 aa). A Phosphoserine modification is found at Ser-164. A disordered region spans residues 164–209; sequence SPPYCSQGRQPTASSDLRMETTPSKALRSRLQEEGHSDRGSSGSVS. Positions 193–202 are enriched in basic and acidic residues; the sequence is RLQEEGHSDR. Residues Lys-235 and Lys-237 each participate in a glycyl lysine isopeptide (Lys-Gly) (interchain with G-Cter in SUMO2) cross-link. Residues 236-245 are compositionally biased toward basic and acidic residues; the sequence is VKMEKSDRPS. Disordered regions lie at residues 236–256 and 341–360; these read VKME…GDDG and SDSE…RERS. 2 consecutive C2H2-type zinc fingers follow at residues 372-394 and 400-422; these read LICI…MRLH and FVCK…IRGH. Lys-426 participates in a covalent cross-link: Glycyl lysine isopeptide (Lys-Gly) (interchain with G-Cter in SUMO2). A C2H2-type 3 zinc finger spans residues 428–451; the sequence is FRCEICGKCFPFQGTLNQHLRKNH. A Phosphoserine modification is found at Ser-463. Residue Lys-474 forms a Glycyl lysine isopeptide (Lys-Gly) (interchain with G-Cter in SUMO2) linkage. A disordered region spans residues 478 to 500; that stretch reads DASASEMGLDSRMEIHTVSDAPD.

As to expression, expressed in several tissues, including heart, brain, thymus, skeletal muscle, small intestine, testis, kidney, placenta, peripheral blood cells and adult and fetal liver.

It is found in the nucleus. Functionally, may be a transcriptional repressor. The sequence is that of Zinc finger and BTB domain-containing protein 34 (ZBTB34) from Homo sapiens (Human).